A 711-amino-acid polypeptide reads, in one-letter code: Angiogenic factor with G patch and FHA domains 1 (711 aa).

Residues Met1 to Pro19 show a composition bias toward pro residues. 4 disordered regions span residues Met1–Leu23, Ala137–Ala184, Pro260–Gln297, and Glu311–Glu400. Ala2 is modified (N-acetylalanine). 2 positions are modified to phosphoserine: Ser7 and Ser12. Positions Pro19–Glu85 form a coiled coil. The segment covering Ala167 to Val176 has biased composition (polar residues). A compositionally biased stretch (basic residues) spans Arg270–Lys279. Residues Asn287–Gln297 show a composition bias toward basic and acidic residues. The residue at position 344 (Ser344) is a Phosphoserine. Positions Ser361–Ile370 are enriched in acidic residues. Residues Gln374–Ser391 show a composition bias toward basic and acidic residues. Positions Ala431 to Ile484 constitute an FHA domain. Composition is skewed to basic and acidic residues over residues Leu579 to Ala606 and Glu613 to Met623. The interval Leu579–Met623 is disordered. Residues Asp616–Leu662 enclose the G-patch domain. The residue at position 661 (Lys661) is an N6-acetyllysine. The segment covering Phe690 to Thr699 has biased composition (basic and acidic residues). The segment at Phe690–Glu711 is disordered.

As to quaternary structure, interacts with the secreted angiogenic factor TNFSF12.

It is found in the cytoplasm. It localises to the secreted. Functionally, promotes angiogenesis and the proliferation of endothelial cells. Able to bind to endothelial cells and promote cell proliferation, suggesting that it may act in an autocrine fashion. The chain is Angiogenic factor with G patch and FHA domains 1 (Aggf1) from Mus musculus (Mouse).